A 587-amino-acid chain; its full sequence is V-type proton ATPase catalytic subunit A (587 aa).

243-250 (GAFGCGKT) contributes to the ATP binding site.

The protein belongs to the ATPase alpha/beta chains family. As to quaternary structure, V-ATPase is a heteromultimeric enzyme composed of a peripheral catalytic V1 complex (main components: subunits A, B, C, D, E, and F) attached to an integral membrane V0 proton pore complex (main component: the proteolipid protein).

It catalyses the reaction ATP + H2O + 4 H(+)(in) = ADP + phosphate + 5 H(+)(out). Functionally, catalytic subunit of the peripheral V1 complex of vacuolar ATPase. V-ATPase vacuolar ATPase is responsible for acidifying a variety of intracellular compartments in eukaryotic cells. The chain is V-type proton ATPase catalytic subunit A from Cyanidium caldarium (Red alga).